The sequence spans 80 residues: Cortexin-3 (80 aa).

Residues 28 to 48 (TTFVFVILLFIFLGILIVRCF) traverse the membrane as a helical segment.

This sequence belongs to the cortexin family.

It is found in the membrane. This is Cortexin-3 (Ctxn3) from Mus musculus (Mouse).